The primary structure comprises 118 residues: Ribosome-binding factor A (118 aa).

Belongs to the RbfA family. Monomer. Binds 30S ribosomal subunits, but not 50S ribosomal subunits or 70S ribosomes.

The protein resides in the cytoplasm. Functionally, one of several proteins that assist in the late maturation steps of the functional core of the 30S ribosomal subunit. Associates with free 30S ribosomal subunits (but not with 30S subunits that are part of 70S ribosomes or polysomes). Required for efficient processing of 16S rRNA. May interact with the 5'-terminal helix region of 16S rRNA. The sequence is that of Ribosome-binding factor A from Streptococcus pyogenes serotype M1.